Here is a 157-residue protein sequence, read N- to C-terminus: Increased recombination centers protein 23 (157 aa).

Residues 1–6 (MIEALE) are Cytoplasmic-facing. Residues 7-29 (IVLLLVIQSLQYICRTCIAFLLI) form a helical membrane-spanning segment. Residues 30 to 33 (PFLG) are Lumenal-facing. The chain crosses the membrane as a helical span at residues 34–56 (LYAFDLFLYVYRMILYLSQMFNY). Over 57–157 (KRKLGRSKTN…EEGYYIAGSI (101 aa)) the chain is Cytoplasmic.

Its subcellular location is the endoplasmic reticulum membrane. Functionally, is probably involved in a pathway contributing to genomic integrity. This chain is Increased recombination centers protein 23 (IRC23), found in Saccharomyces cerevisiae (strain ATCC 204508 / S288c) (Baker's yeast).